The sequence spans 534 residues: Cytochrome c oxidase subunit 1 (534 aa).

Residues 1 to 14 (MVQRWLYSTNAKDI) lie on the Mitochondrial matrix side of the membrane. The helical transmembrane segment at 15 to 39 (AVLYFMLAIFSGMAGTAMSLIIRLE) threads the bilayer. The Ca(2+) site is built by Glu39, Ala42, and Gly44. The Mitochondrial intermembrane segment spans residues 40 to 54 (LAAPGSQYLHGNSQL). A helical transmembrane segment spans residues 55-88 (FNVLVVGHAVLMIFFLVMPALIGGFGNYLLPLMI). His62 serves as a coordination point for Fe(II)-heme a. At 89–97 (GATDTAFPR) the chain is on the mitochondrial matrix side. Residues 98-118 (INNIAFWVLPMGLVCLVTSTL) form a helical membrane-spanning segment. Residues 119–142 (VESGAGTGWTVYPPLSSIQAHSGP) lie on the Mitochondrial intermembrane side of the membrane. A helical transmembrane segment spans residues 143 to 171 (SVDLAIFALHLTSISSLLGAINFIVTTLN). Over 172 to 183 (MRTNGMTMHKLP) the chain is Mitochondrial matrix. Residues 184–215 (LFVWSIFITAFLLLLSLPVLSAGITMLLLDRN) form a helical membrane-spanning segment. Residues 216-228 (FNTSFFEVSGGGD) are Mitochondrial intermembrane-facing. Residues 229–263 (PILYEHLFWFFGHPEVYILIIPGFGIISHVVSTYS) form a helical membrane-spanning segment. Cu cation is bound at residue His241. The 1'-histidyl-3'-tyrosine (His-Tyr) cross-link spans 241–245 (HPEVY). Tyr245 contributes to the O2 binding site. Residues 264–269 (KKPVFG) lie on the Mitochondrial matrix side of the membrane. Residues 270–295 (EISMVYAMASIGLLGFLVWSHHMYIV) form a helical membrane-spanning segment. Cu cation contacts are provided by His290 and His291. At 296-298 (GLD) the chain is on the mitochondrial intermembrane side. The chain crosses the membrane as a helical span at residues 299–327 (ADTRAYFTSATMIIAIPTGIKIFSWLATI). Topologically, residues 328–335 (HGGSIRLA) are mitochondrial matrix. A helical membrane pass occupies residues 336 to 358 (TPMLYAIAFLFLFTMGGLTGVAL). At 359–370 (ANASLDVAFHDT) the chain is on the mitochondrial intermembrane side. Residues His368 and Asp369 each contribute to the Mg(2+) site. The chain crosses the membrane as a helical span at residues 371 to 400 (YYVVGHFHYVLSMGAIFSLFAGYYYWSPQI). His376 is a binding site for heme a3. A Fe(II)-heme a-binding site is contributed by His378. Residues 401–406 (LGLNYN) lie on the Mitochondrial matrix side of the membrane. Residues 407–431 (EKLAQIQFWLIFIGANVIFFPMHFL) traverse the membrane as a helical segment. Residues 432–449 (GINGMPRRIPDYPDAFAG) are Mitochondrial intermembrane-facing. Pro441 contributes to the Ca(2+) binding site. The chain crosses the membrane as a helical span at residues 450–474 (WNYVASIGSFIATLSLFLFIYILYD). Over 475-534 (QLVNGLNNKVNNKSVIYNKAPDFVESNTIFNLNTVKSSSIEFLLTSPPAVHSFNTPAVQS) the chain is Mitochondrial matrix.

It belongs to the heme-copper respiratory oxidase family. In terms of assembly, component of the cytochrome c oxidase (complex IV, CIV), a multisubunit enzyme composed of 12 subunits. The complex is composed of a catalytic core of 3 subunits COX1, COX2 and COX3, encoded in the mitochondrial DNA, and 9 supernumerary subunits COX4, COX5A (or COX5B), COX6, COX7, COX8, COX9, COX12, COX13 and COX26, which are encoded in the nuclear genome. The complex exists as a monomer or a dimer and forms supercomplexes (SCs) in the inner mitochondrial membrane with a dimer of ubiquinol-cytochrome c oxidoreductase (cytochrome b-c1 complex, complex III, CIII), resulting in 2 different assemblies (supercomplexes III(2)IV and III(2)IV(2)). Heme serves as cofactor. Requires Cu cation as cofactor. The N-terminus is blocked.

The protein resides in the mitochondrion inner membrane. The catalysed reaction is 4 Fe(II)-[cytochrome c] + O2 + 8 H(+)(in) = 4 Fe(III)-[cytochrome c] + 2 H2O + 4 H(+)(out). It participates in energy metabolism; oxidative phosphorylation. Its function is as follows. Component of the cytochrome c oxidase, the last enzyme in the mitochondrial electron transport chain which drives oxidative phosphorylation. The respiratory chain contains 3 multisubunit complexes succinate dehydrogenase (complex II, CII), ubiquinol-cytochrome c oxidoreductase (cytochrome b-c1 complex, complex III, CIII) and cytochrome c oxidase (complex IV, CIV), that cooperate to transfer electrons derived from NADH and succinate to molecular oxygen, creating an electrochemical gradient over the inner membrane that drives transmembrane transport and the ATP synthase. Cytochrome c oxidase is the component of the respiratory chain that catalyzes the reduction of oxygen to water. Electrons originating from reduced cytochrome c in the intermembrane space (IMS) are transferred via the dinuclear copper A center (CU(A)) of COX2 and heme A of COX1 to the active site in COX1, a binuclear center (BNC) formed by heme A3 and copper B (CU(B)). The BNC reduces molecular oxygen to 2 water molecules using 4 electrons from cytochrome c in the IMS and 4 protons from the mitochondrial matrix. COX1 is a catalytic core subunit containing heme A and the active site BNC with heme A3 and the copper atom CU(B). The chain is Cytochrome c oxidase subunit 1 (COX1) from Saccharomyces cerevisiae (strain ATCC 204508 / S288c) (Baker's yeast).